A 372-amino-acid chain; its full sequence is GDSL esterase/lipase At1g54020 (372 aa).

The first 26 residues, 1–26 (MECSSVSVLGILLVFPLLHNLVTISG), serve as a signal peptide directing secretion. The Nucleophile role is filled by S40. Residues N161 and N280 are each glycosylated (N-linked (GlcNAc...) asparagine). Active-site residues include D314 and H317.

The protein belongs to the 'GDSL' lipolytic enzyme family.

The protein localises to the secreted. The polypeptide is GDSL esterase/lipase At1g54020 (Arabidopsis thaliana (Mouse-ear cress)).